A 173-amino-acid polypeptide reads, in one-letter code: Adenine phosphoribosyltransferase (173 aa).

It belongs to the purine/pyrimidine phosphoribosyltransferase family. As to quaternary structure, homodimer.

It is found in the cytoplasm. The enzyme catalyses AMP + diphosphate = 5-phospho-alpha-D-ribose 1-diphosphate + adenine. It functions in the pathway purine metabolism; AMP biosynthesis via salvage pathway; AMP from adenine: step 1/1. In terms of biological role, catalyzes a salvage reaction resulting in the formation of AMP, that is energically less costly than de novo synthesis. This chain is Adenine phosphoribosyltransferase, found in Petrotoga mobilis (strain DSM 10674 / SJ95).